We begin with the raw amino-acid sequence, 140 residues long: ATP synthase epsilon chain (140 aa).

Belongs to the ATPase epsilon chain family. As to quaternary structure, F-type ATPases have 2 components, CF(1) - the catalytic core - and CF(0) - the membrane proton channel. CF(1) has five subunits: alpha(3), beta(3), gamma(1), delta(1), epsilon(1). CF(0) has three main subunits: a, b and c.

It localises to the cell inner membrane. Its function is as follows. Produces ATP from ADP in the presence of a proton gradient across the membrane. This is ATP synthase epsilon chain from Sodalis glossinidius (strain morsitans).